Reading from the N-terminus, the 99-residue chain is Malonate decarboxylase acyl carrier protein (99 aa).

Serine 25 is subject to O-(phosphoribosyl dephospho-coenzyme A)serine.

It belongs to the MdcC family. Covalently binds the prosthetic group of malonate decarboxylase.

The protein resides in the cytoplasm. Functionally, subunit of malonate decarboxylase, it is an acyl carrier protein to which acetyl and malonyl thioester residues are bound via a 2'-(5''-phosphoribosyl)-3'-dephospho-CoA prosthetic group and turn over during the catalytic mechanism. In Pseudomonas fluorescens (strain Pf0-1), this protein is Malonate decarboxylase acyl carrier protein.